The sequence spans 257 residues: Undecaprenyl-diphosphatase (257 aa).

8 helical membrane-spanning segments follow: residues 4–24 (LIRVVILAIVQGIAEFLPISS), 41–61 (SVTLEIILHAGTLGSILVVFW), 74–94 (VIGLLVIGTLPAVVIGLTIKT), 103–123 (PLLAGAMLIVTGVMLIVLGRL), 133–153 (LGLGAAFLVGCFQAFAILPGI), 173–193 (SVTFSFLLAIPAILGATVLAI), 209–229 (VLSIGAAVAFAVGIVALKWLI), and 236–256 (RLHWFAYWCIPAGLLVVLLNL).

The protein belongs to the UppP family.

The protein localises to the cell inner membrane. The enzyme catalyses di-trans,octa-cis-undecaprenyl diphosphate + H2O = di-trans,octa-cis-undecaprenyl phosphate + phosphate + H(+). Functionally, catalyzes the dephosphorylation of undecaprenyl diphosphate (UPP). Confers resistance to bacitracin. In Rhodopirellula baltica (strain DSM 10527 / NCIMB 13988 / SH1), this protein is Undecaprenyl-diphosphatase.